A 122-amino-acid polypeptide reads, in one-letter code: Double-headed protease inhibitor, submandibular gland (122 aa).

2 Kazal-like domains span residues 10 to 70 and 71 to 121; these read GGRK…ECDI and ECTQ…QCQS. 6 disulfides stabilise this stretch: Cys-16-Cys-50, Cys-28-Cys-47, Cys-36-Cys-68, Cys-72-Cys-101, Cys-79-Cys-98, and Cys-87-Cys-119.

The protein localises to the secreted. Its function is as follows. This inhibitor is composed of two homologous actively inhibiting halves: one which inhibits trypsin, the other which inhibits elastase. This Martes martes (European pine marten) protein is Double-headed protease inhibitor, submandibular gland.